Reading from the N-terminus, the 232-residue chain is Phosphatidylserine decarboxylase proenzyme (232 aa).

The Schiff-base intermediate with substrate; via pyruvic acid role is filled by Ser190. Ser190 bears the Pyruvic acid (Ser); by autocatalysis mark.

Belongs to the phosphatidylserine decarboxylase family. PSD-A subfamily. In terms of assembly, heterodimer of a large membrane-associated beta subunit and a small pyruvoyl-containing alpha subunit. Requires pyruvate as cofactor. Is synthesized initially as an inactive proenzyme. Formation of the active enzyme involves a self-maturation process in which the active site pyruvoyl group is generated from an internal serine residue via an autocatalytic post-translational modification. Two non-identical subunits are generated from the proenzyme in this reaction, and the pyruvate is formed at the N-terminus of the alpha chain, which is derived from the carboxyl end of the proenzyme. The post-translation cleavage follows an unusual pathway, termed non-hydrolytic serinolysis, in which the side chain hydroxyl group of the serine supplies its oxygen atom to form the C-terminus of the beta chain, while the remainder of the serine residue undergoes an oxidative deamination to produce ammonia and the pyruvoyl prosthetic group on the alpha chain.

It localises to the cell membrane. The enzyme catalyses a 1,2-diacyl-sn-glycero-3-phospho-L-serine + H(+) = a 1,2-diacyl-sn-glycero-3-phosphoethanolamine + CO2. Its pathway is phospholipid metabolism; phosphatidylethanolamine biosynthesis; phosphatidylethanolamine from CDP-diacylglycerol: step 2/2. Catalyzes the formation of phosphatidylethanolamine (PtdEtn) from phosphatidylserine (PtdSer). This is Phosphatidylserine decarboxylase proenzyme from Cereibacter sphaeroides (strain ATCC 17023 / DSM 158 / JCM 6121 / CCUG 31486 / LMG 2827 / NBRC 12203 / NCIMB 8253 / ATH 2.4.1.) (Rhodobacter sphaeroides).